A 687-amino-acid polypeptide reads, in one-letter code: MAGPEGSIFNASAMQIVQIHHYAEGSVTPEVDKLYQDDAVWIISSSFIIFTMHSGFGLLESGSVSAKDEVNIMVKNVVDVVFGGLSYWSCGFGFSYGDIPEWRNPYVGFGKFFYDPTRDYGTRETINQEGWSYASFLFQLSLATTASTIVSGAVAERAKLKSYILLGCIVILIQALPAHWVWDKEGVFYKKGVVDFAGCSAVHLVGGIIGLIATVFLKPRRNRFNEDSVHQMSSPTNALLGTFLLWWGWFGINAGSVWGITGGRWRLGARAAVATIMASIGGGATAITISFVKTKKLQVNFLINGILSSIVSITAICAVSRPWHALVIGSISSVFSIAVLPLLDRLHIDDPVGIVPIHLTSSIWGMIAVGIFCEEDKYLGSATNNRSGLLYSWSFELLWVQLQCTAAILIYSATTGFLALFLISKSPLGLRVTDYEEQIGADVIEHGLAGTNVARYVLEKPLSTRTFQTVTKAITKWKMLAKKKSRQKRMEAAKLKRQEEQETFTNGTAIANGNGNVLHHRTNATESNGTGAPKRSNGPAFNNQITPLAVSSTVSTARNGPSTGRRTESTAIEIEQPIEAVPPEVVAAAVLPPEERPGPSTNSNVSIEASVEKSPSSSTSRRSISIRSSPSIHTVSAISTAAPDSRPSTASATSIISKKSSKNSTVGKFVKAPAPRALSPPDNNPPV.

Helical transmembrane passes span 39–59 (AVWI…FGLL), 77–97 (VVDV…FSYG), 134–154 (ASFL…SGAV), 162–182 (SYIL…HWVW), 196–216 (FAGC…ATVF), 240–260 (LGTF…VWGI), 272–292 (AVAT…ISFV), 299–319 (VNFL…ICAV), 323–343 (WHAL…LPLL), 352–372 (VGIV…VGIF), and 404–424 (CTAA…FLIS). Disordered stretches follow at residues 521–544 (RTNA…FNNQ), 549–568 (AVSS…RRTE), and 592–687 (PPEE…NPPV). The span at 549-564 (AVSSTVSTARNGPSTG) shows a compositional bias: polar residues. Composition is skewed to low complexity over residues 614 to 632 (SPSS…SPSI) and 648 to 665 (STAS…KNST).

Belongs to the ammonia transporter channel (TC 1.A.11.2) family.

It is found in the membrane. In terms of biological role, involved in the uptake of ammonia. The sequence is that of Putative ammonium transporter 3 (amt-3) from Caenorhabditis elegans.